Reading from the N-terminus, the 688-residue chain is DNA ligase (688 aa).

Residues 38-42, 87-88, and glutamate 118 each bind NAD(+); these read DEEYD and SL. Lysine 120 functions as the N6-AMP-lysine intermediate in the catalytic mechanism. Residues arginine 141, glutamate 175, lysine 291, and lysine 315 each contribute to the NAD(+) site. 4 residues coordinate Zn(2+): cysteine 409, cysteine 412, cysteine 428, and cysteine 433. The region spanning 590 to 679 is the BRCT domain; the sequence is VKLDILRGLT…AELKGYNFDE (90 aa).

It belongs to the NAD-dependent DNA ligase family. LigA subfamily. Mg(2+) serves as cofactor. The cofactor is Mn(2+).

It carries out the reaction NAD(+) + (deoxyribonucleotide)n-3'-hydroxyl + 5'-phospho-(deoxyribonucleotide)m = (deoxyribonucleotide)n+m + AMP + beta-nicotinamide D-nucleotide.. DNA ligase that catalyzes the formation of phosphodiester linkages between 5'-phosphoryl and 3'-hydroxyl groups in double-stranded DNA using NAD as a coenzyme and as the energy source for the reaction. It is essential for DNA replication and repair of damaged DNA. The sequence is that of DNA ligase from Thermotoga maritima (strain ATCC 43589 / DSM 3109 / JCM 10099 / NBRC 100826 / MSB8).